Reading from the N-terminus, the 169-residue chain is MFLRAIGRPLLAKVKQTTGIVGLDVVPNARAVLIDLYSKTLKEIQAVPEDEGYRKAVESFTRQRLNVCKEEEDWEMIEKRLGCGQVEELIEEARDELTLIGKMIEWDPWGVPDDYECEVIENDAPIPKHVPQHRPGPLPEQFYKTLEGLIAESKTEIPAATPSDPQLKE.

Residues 1–11 constitute a mitochondrion transit peptide; that stretch reads MFLRAIGRPLL.

It belongs to the complex I NDUFA5 subunit family. As to quaternary structure, complex I is composed of at least 49 different subunits.

It is found in the mitochondrion inner membrane. Its function is as follows. Accessory subunit of the mitochondrial membrane respiratory chain NADH dehydrogenase (Complex I), that is believed not to be involved in catalysis. Complex I functions in the transfer of electrons from NADH to the respiratory chain. The immediate electron acceptor for the enzyme is believed to be ubiquinone. The chain is Probable NADH dehydrogenase [ubiquinone] 1 alpha subcomplex subunit 5, mitochondrial from Arabidopsis thaliana (Mouse-ear cress).